Reading from the N-terminus, the 318-residue chain is Olfactory receptor 5G26 (318 aa).

Topologically, residues 1–28 are extracellular; sequence MMHRNQTVVTEFFFTGLTSSFHLQIVLF. N-linked (GlcNAc...) asparagine glycosylation occurs at asparagine 5. A helical membrane pass occupies residues 29 to 49; it reads LTFLCVYLATLLGNLGMIILI. At 50-56 the chain is on the cytoplasmic side; that stretch reads HLDTRLH. Residues 57–77 traverse the membrane as a helical segment; that stretch reads IPMYFFLSHLSFVDACSSSVI. At 78–93 the chain is on the extracellular side; it reads SPKMLSDMFVDKKVIS. The chain crosses the membrane as a helical span at residues 94 to 114; that stretch reads FLGCAIQLCLFSQFVVTECFL. Residues cysteine 97 and cysteine 189 are joined by a disulfide bond. The Cytoplasmic portion of the chain corresponds to 115 to 144; it reads LASMAYDRYVAICKPLLYTLIMSQRVCVQL. Residues 145 to 165 traverse the membrane as a helical segment; the sequence is VIGPYSIGFVSTMVHIISAFV. The Extracellular segment spans residues 166 to 198; it reads LPYCGPNLINHFFCDLLPVLSLACANTQMKKRL. The chain crosses the membrane as a helical span at residues 199-219; sequence LFIVAGILGVFSGIIILVSYV. Residues 220 to 239 are Cytoplasmic-facing; it reads YIAITILKISSADGRRKAFS. A helical transmembrane segment spans residues 240–260; that stretch reads TCSSHLTAVSILYGTLFFIYV. The Extracellular segment spans residues 261-271; it reads RPSSSFSLDIN. A helical transmembrane segment spans residues 272–292; it reads KVVSLFYTTVIPMLNPFIYSL. The Cytoplasmic portion of the chain corresponds to 293 to 318; it reads RNKEVKDALIRTFEKQFCYSFQDKIL.

It belongs to the G-protein coupled receptor 1 family.

It localises to the cell membrane. Functionally, potential odorant receptor. In Mus musculus (Mouse), this protein is Olfactory receptor 5G26.